Here is a 432-residue protein sequence, read N- to C-terminus: Enolase (432 aa).

Glutamine 167 serves as a coordination point for (2R)-2-phosphoglycerate. The Proton donor role is filled by glutamate 209. Mg(2+) is bound by residues aspartate 246, glutamate 289, and aspartate 316. The (2R)-2-phosphoglycerate site is built by lysine 341, arginine 370, serine 371, and lysine 392. The Proton acceptor role is filled by lysine 341.

It belongs to the enolase family. It depends on Mg(2+) as a cofactor.

Its subcellular location is the cytoplasm. The protein resides in the secreted. It is found in the cell surface. It catalyses the reaction (2R)-2-phosphoglycerate = phosphoenolpyruvate + H2O. Its pathway is carbohydrate degradation; glycolysis; pyruvate from D-glyceraldehyde 3-phosphate: step 4/5. In terms of biological role, catalyzes the reversible conversion of 2-phosphoglycerate (2-PG) into phosphoenolpyruvate (PEP). It is essential for the degradation of carbohydrates via glycolysis. The protein is Enolase of Petrotoga mobilis (strain DSM 10674 / SJ95).